Reading from the N-terminus, the 749-residue chain is Subtilisin-like protease SBT4.14 (749 aa).

Positions 1–28 (MIRSKCSCHHHLLVLVMVVLWISPRYAS) are cleaved as a signal peptide. Positions 29 to 115 (AEDEHAKDFY…VSRNQYRKLH (87 aa)) are cleaved as a propeptide — activation peptide. In terms of domain architecture, Inhibitor I9 spans 38 to 115 (YIIYLGDRPD…VSRNQYRKLH (78 aa)). The Peptidase S8 domain occupies 119 to 595 (SWDFVGLPLT…GGQINPRRAA (477 aa)). Asp145 serves as the catalytic Charge relay system. Asn176 is a glycosylation site (N-linked (GlcNAc...) asparagine). The active-site Charge relay system is His210. N-linked (GlcNAc...) asparagine glycosylation is found at Asn225, Asn233, Asn446, and Asn458. Catalysis depends on Ser536, which acts as the Charge relay system. N-linked (GlcNAc...) asparagine glycosylation occurs at Asn618.

This sequence belongs to the peptidase S8 family. In terms of processing, the C-terminal propeptide is autocleaved. As to expression, expressed only in roots, particularly in xylem.

The chain is Subtilisin-like protease SBT4.14 from Arabidopsis thaliana (Mouse-ear cress).